Here is a 175-residue protein sequence, read N- to C-terminus: Large ribosomal subunit protein uL10 (175 aa).

The protein belongs to the universal ribosomal protein uL10 family. Part of the ribosomal stalk of the 50S ribosomal subunit. The N-terminus interacts with L11 and the large rRNA to form the base of the stalk. The C-terminus forms an elongated spine to which L12 dimers bind in a sequential fashion forming a multimeric L10(L12)X complex.

Forms part of the ribosomal stalk, playing a central role in the interaction of the ribosome with GTP-bound translation factors. The polypeptide is Large ribosomal subunit protein uL10 (Mycobacterium sp. (strain JLS)).